A 102-amino-acid polypeptide reads, in one-letter code: Large ribosomal subunit protein uL23 (102 aa).

The protein belongs to the universal ribosomal protein uL23 family. As to quaternary structure, part of the 50S ribosomal subunit. Contacts protein L29, and trigger factor when it is bound to the ribosome.

In terms of biological role, one of the early assembly proteins it binds 23S rRNA. One of the proteins that surrounds the polypeptide exit tunnel on the outside of the ribosome. Forms the main docking site for trigger factor binding to the ribosome. The chain is Large ribosomal subunit protein uL23 from Paramagnetospirillum magneticum (strain ATCC 700264 / AMB-1) (Magnetospirillum magneticum).